We begin with the raw amino-acid sequence, 151 residues long: UPF0756 membrane protein lhv_0995 (151 aa).

5 helical membrane passes run 4-24 (WLFL…SLII), 25-45 (ATGV…LPVI), 52-72 (WGVT…QIGF), 78-98 (TFKS…AILS), and 115-135 (LVLG…GPVI).

The protein belongs to the UPF0756 family.

The protein localises to the cell membrane. The polypeptide is UPF0756 membrane protein lhv_0995 (Lactobacillus helveticus (strain DPC 4571)).